A 130-amino-acid chain; its full sequence is Aspartate 1-decarboxylase (130 aa).

Ser25 serves as the catalytic Schiff-base intermediate with substrate; via pyruvic acid. Ser25 is modified (pyruvic acid (Ser)). Thr57 lines the substrate pocket. The Proton donor role is filled by Tyr58. 73 to 75 (GAA) serves as a coordination point for substrate.

The protein belongs to the PanD family. As to quaternary structure, heterooctamer of four alpha and four beta subunits. Pyruvate serves as cofactor. Post-translationally, is synthesized initially as an inactive proenzyme, which is activated by self-cleavage at a specific serine bond to produce a beta-subunit with a hydroxyl group at its C-terminus and an alpha-subunit with a pyruvoyl group at its N-terminus.

The protein resides in the cytoplasm. The catalysed reaction is L-aspartate + H(+) = beta-alanine + CO2. It participates in cofactor biosynthesis; (R)-pantothenate biosynthesis; beta-alanine from L-aspartate: step 1/1. Functionally, catalyzes the pyruvoyl-dependent decarboxylation of aspartate to produce beta-alanine. This is Aspartate 1-decarboxylase from Myxococcus xanthus (strain DK1622).